We begin with the raw amino-acid sequence, 408 residues long: Phosphopentomutase (408 aa).

Mn(2+) is bound by residues Asp-10, Asp-307, His-312, Asp-348, His-349, and His-360.

It belongs to the phosphopentomutase family. Mn(2+) serves as cofactor.

The protein localises to the cytoplasm. The enzyme catalyses 2-deoxy-alpha-D-ribose 1-phosphate = 2-deoxy-D-ribose 5-phosphate. It carries out the reaction alpha-D-ribose 1-phosphate = D-ribose 5-phosphate. Its pathway is carbohydrate degradation; 2-deoxy-D-ribose 1-phosphate degradation; D-glyceraldehyde 3-phosphate and acetaldehyde from 2-deoxy-alpha-D-ribose 1-phosphate: step 1/2. Isomerase that catalyzes the conversion of deoxy-ribose 1-phosphate (dRib-1-P) and ribose 1-phosphate (Rib-1-P) to deoxy-ribose 5-phosphate (dRib-5-P) and ribose 5-phosphate (Rib-5-P), respectively. The polypeptide is Phosphopentomutase (Buchnera aphidicola subsp. Baizongia pistaciae (strain Bp)).